Consider the following 51-residue polypeptide: Insulin (51 aa).

3 disulfides stabilise this stretch: Cys-7/Cys-37, Cys-19/Cys-50, and Cys-36/Cys-41.

Belongs to the insulin family. In terms of assembly, heterodimer of a B chain and an A chain linked by two disulfide bonds.

It localises to the secreted. Its function is as follows. Insulin decreases blood glucose concentration. It increases cell permeability to monosaccharides, amino acids and fatty acids. It accelerates glycolysis, the pentose phosphate cycle, and glycogen synthesis in liver. The polypeptide is Insulin (INS) (Balaenoptera borealis (Sei whale)).